The primary structure comprises 171 residues: Mitochondrial import inner membrane translocase subunit Tim17-A (171 aa).

Cysteines 9 and 78 form a disulfide. A run of 3 helical transmembrane segments spans residues 17 to 37 (CGGA…FKGF), 63 to 77 (GGSF…STID), and 113 to 133 (VGSA…GILL). Residues 144 to 171 (GPQFTEDHSQLPSSQLPSSPFGDYRQYQ) form a disordered region. Low complexity predominate over residues 153 to 163 (QLPSSQLPSSP).

The protein belongs to the Tim17/Tim22/Tim23 family. As to quaternary structure, component of the TIM23 complex at least composed of TIMM23, TIMM17 (TIMM17A or TIMM17B) and TIMM50. The complex interacts with the TIMM44 component of the PAM complex and with DNAJC15. Post-translationally, degraded by YMEL1 downstream of the integrated stress response (ISR).

It localises to the mitochondrion inner membrane. Functionally, essential component of the TIM23 complex, a complex that mediates the translocation of transit peptide-containing proteins across the mitochondrial inner membrane. The protein is Mitochondrial import inner membrane translocase subunit Tim17-A (Timm17a) of Mus musculus (Mouse).